We begin with the raw amino-acid sequence, 37 residues long: Delta-amaurobitoxin-Pl1b (37 aa).

4 disulfide bridges follow: cysteine 2–cysteine 18, cysteine 9–cysteine 23, cysteine 17–cysteine 33, and cysteine 25–cysteine 31. Serine 37 is subject to Serine amide.

The protein belongs to the neurotoxin 07 (Beta/delta-agtx) family. 02 (aga-3) subfamily. Expressed by the venom gland.

The protein resides in the secreted. Its function is as follows. Insecticidal toxin. Binds to site 4 of insect voltage-gated sodium channel (Nav) and inhibits channel inactivation. In vivo, it lethal to lepidopteran larvae. Has no adverse affects when intracerebroventricularly injected in mice at a dose of 0.2 ug, but causes reversible paralysis of legs when injected intracerebroventricularly in mice at a dose of 2.0 ug. The chain is Delta-amaurobitoxin-Pl1b from Pireneitega luctuosa (Tangled nest spider).